A 575-amino-acid polypeptide reads, in one-letter code: Sulfite reductase [NADPH] hemoprotein beta-component (575 aa).

Positions 438, 444, 484, and 488 each coordinate [4Fe-4S] cluster. Position 488 (Cys-488) interacts with siroheme.

It belongs to the nitrite and sulfite reductase 4Fe-4S domain family. Alpha(8)-beta(8). The alpha component is a flavoprotein, the beta component is a hemoprotein. Siroheme serves as cofactor. Requires [4Fe-4S] cluster as cofactor.

The catalysed reaction is hydrogen sulfide + 3 NADP(+) + 3 H2O = sulfite + 3 NADPH + 4 H(+). Its pathway is sulfur metabolism; hydrogen sulfide biosynthesis; hydrogen sulfide from sulfite (NADPH route): step 1/1. Functionally, component of the sulfite reductase complex that catalyzes the 6-electron reduction of sulfite to sulfide. This is one of several activities required for the biosynthesis of L-cysteine from sulfate. The chain is Sulfite reductase [NADPH] hemoprotein beta-component from Vibrio atlanticus (strain LGP32) (Vibrio splendidus (strain Mel32)).